Reading from the N-terminus, the 327-residue chain is Nucleotide-binding protein Mflv_3714 (327 aa).

Residues 1 to 22 are compositionally biased toward basic and acidic residues; it reads MTRQGMRDDLRGEADSVVHDGT. A disordered region spans residues 1–29; sequence MTRQGMRDDLRGEADSVVHDGTDDIDNEN. An ATP-binding site is contributed by 50 to 57; that stretch reads GLSGAGRG. 101–104 serves as a coordination point for GTP; the sequence is DVRS.

This sequence belongs to the RapZ-like family.

In terms of biological role, displays ATPase and GTPase activities. This chain is Nucleotide-binding protein Mflv_3714, found in Mycolicibacterium gilvum (strain PYR-GCK) (Mycobacterium gilvum (strain PYR-GCK)).